Consider the following 341-residue polypeptide: MATIKDVAKHAGVSTTTVSHVINKTRFVAENTKAAVWAAIKELHYSPSAVARSLKVNHTKSIGLLATSSEAPYFAEVIEAVENSCYSKGYTLILCNSHNNLDKQKAYLAMLAQKRVDGLLVMCSEYPDQLLGMLEDYRNIPMVVMDWGTARGDFTDSIIDNAFEGGYLAGRYLIERGHRDIGAIPGQLARNTGGGRHQGFLKALEEANIPVREEWIVQGDSEPESGYKAMHQILTQKHRPTAVFCGGDIMAMGAICAADELGLRVPQDISVIGYDNVRNARYFSPALTTIHQPKERLGETAFAMLLDRIVSKREDPQTIEVHPKLVERRSVADGPFRDYRR.

In terms of domain architecture, HTH lacI-type spans 2-56 (ATIKDVAKHAGVSTTTVSHVINKTRFVAENTKAAVWAAIKELHYSPSAVARSLKV). The H-T-H motif DNA-binding region spans 4–23 (IKDVAKHAGVSTTTVSHVIN). The DNA-binding element occupies 48-56 (SAVARSLKV). Hypoxanthine is bound by residues Y73, R190, T192, and D275.

Homodimer.

Its pathway is purine metabolism; purine nucleotide biosynthesis [regulation]. Its function is as follows. Is the main repressor of the genes involved in the de novo synthesis of purine nucleotides, regulating purB, purC, purEK, purF, purHD, purL, purMN and guaBA expression. PurR is allosterically activated to bind its cognate DNA by binding the purine corepressors, hypoxanthine or guanine, thereby effecting transcription repression. This Yersinia pestis bv. Antiqua (strain Antiqua) protein is HTH-type transcriptional repressor PurR.